Reading from the N-terminus, the 95-residue chain is uncharacterized protein (95 aa).

A helical transmembrane segment spans residues 12-32 (IASLVVSVVVLLIGLILWFFI).

It localises to the cell membrane. This is an uncharacterized protein from Escherichia coli O6:H1 (strain CFT073 / ATCC 700928 / UPEC).